A 314-amino-acid polypeptide reads, in one-letter code: 4-hydroxy-3-methylbut-2-enyl diphosphate reductase (314 aa).

C12 contacts [4Fe-4S] cluster. 2 residues coordinate (2E)-4-hydroxy-3-methylbut-2-enyl diphosphate: H41 and H74. Residues H41 and H74 each contribute to the dimethylallyl diphosphate site. The isopentenyl diphosphate site is built by H41 and H74. C96 serves as a coordination point for [4Fe-4S] cluster. H124 contacts (2E)-4-hydroxy-3-methylbut-2-enyl diphosphate. H124 is a dimethylallyl diphosphate binding site. Position 124 (H124) interacts with isopentenyl diphosphate. The active-site Proton donor is E126. Residue T168 participates in (2E)-4-hydroxy-3-methylbut-2-enyl diphosphate binding. C198 is a [4Fe-4S] cluster binding site. Residues S226, S227, N228, and S270 each coordinate (2E)-4-hydroxy-3-methylbut-2-enyl diphosphate. Positions 226, 227, 228, and 270 each coordinate dimethylallyl diphosphate. 4 residues coordinate isopentenyl diphosphate: S226, S227, N228, and S270.

This sequence belongs to the IspH family. It depends on [4Fe-4S] cluster as a cofactor.

The enzyme catalyses isopentenyl diphosphate + 2 oxidized [2Fe-2S]-[ferredoxin] + H2O = (2E)-4-hydroxy-3-methylbut-2-enyl diphosphate + 2 reduced [2Fe-2S]-[ferredoxin] + 2 H(+). It carries out the reaction dimethylallyl diphosphate + 2 oxidized [2Fe-2S]-[ferredoxin] + H2O = (2E)-4-hydroxy-3-methylbut-2-enyl diphosphate + 2 reduced [2Fe-2S]-[ferredoxin] + 2 H(+). It participates in isoprenoid biosynthesis; dimethylallyl diphosphate biosynthesis; dimethylallyl diphosphate from (2E)-4-hydroxy-3-methylbutenyl diphosphate: step 1/1. Its pathway is isoprenoid biosynthesis; isopentenyl diphosphate biosynthesis via DXP pathway; isopentenyl diphosphate from 1-deoxy-D-xylulose 5-phosphate: step 6/6. Catalyzes the conversion of 1-hydroxy-2-methyl-2-(E)-butenyl 4-diphosphate (HMBPP) into a mixture of isopentenyl diphosphate (IPP) and dimethylallyl diphosphate (DMAPP). Acts in the terminal step of the DOXP/MEP pathway for isoprenoid precursor biosynthesis. This is 4-hydroxy-3-methylbut-2-enyl diphosphate reductase from Pseudomonas aeruginosa (strain ATCC 15692 / DSM 22644 / CIP 104116 / JCM 14847 / LMG 12228 / 1C / PRS 101 / PAO1).